The following is a 71-amino-acid chain: Protein CYSTEINE-RICH TRANSMEMBRANE MODULE 4 (71 aa).

Positions 1–12 (MSQYSQNQSSGA) are enriched in polar residues. The tract at residues 1–31 (MSQYSQNQSSGAYPTPPVSTGPYMTPPPLGY) is disordered. Residues 14–30 (PTPPVSTGPYMTPPPLG) are compositionally biased toward pro residues. The chain crosses the membrane as a helical span at residues 48–64 (SKGDGFLKGCLAAMCCC).

The protein belongs to the CYSTM1 family. Heterodimers. Interacts with CYSTM6, CYSTM7, CYSTM12 and WIH1/CYSTM13. As to expression, mostly expressed in roots, stems, rosette leaves and siliques and, to a lower extent, in flowers and cauline leaves.

The protein localises to the cell membrane. It localises to the cytoplasm. In terms of biological role, involved in resistance to abiotic stress. The chain is Protein CYSTEINE-RICH TRANSMEMBRANE MODULE 4 from Arabidopsis thaliana (Mouse-ear cress).